The following is a 250-amino-acid chain: DNA repair protein RecO (250 aa).

Belongs to the RecO family.

Its function is as follows. Involved in DNA repair and RecF pathway recombination. This is DNA repair protein RecO from Staphylococcus aureus (strain Mu3 / ATCC 700698).